Consider the following 266-residue polypeptide: UPF0294 protein YafD (266 aa).

This sequence belongs to the UPF0294 family.

Its subcellular location is the cytoplasm. The chain is UPF0294 protein YafD from Salmonella typhi.